Consider the following 68-residue polypeptide: MVYYPELLVWVSQEPFPYKEMEGGLTKGRLPVPKEVNRKKMDEPIAASLIPPGNHEPGSPAIGYLHPF.

As to quaternary structure, interacts with FLNA. Interacts with the latency-associated peptides (LAP) of TGFB1 and TGFB2; the interaction results in a decrease in TGFB autoinduction. Post-translationally, phosphorylated on Ser-59. Phosphorylation decreases stability and activity.

Its subcellular location is the cytoplasm. Its function is as follows. May have roles in neural function. Ectopic expression promotes axonal regeneration. Also augments motility of gliomas. May also have roles in cellular differentiation. Induces differentiation of fibroblast into myofibroblast and myofibroblast ameboid migration. Increases retinoic-acid regulation of lipid-droplet biogenesis. Down-regulates the expression of TGFB1 and TGFB2 but not of TGFB3. May play a role in the regulation of alveolar generation. In Rattus norvegicus (Rat), this protein is Neuronal regeneration-related protein (Nrep).